We begin with the raw amino-acid sequence, 181 residues long: NADH-quinone oxidoreductase subunit I (181 aa).

2 4Fe-4S ferredoxin-type domains span residues 52–81 (TRDS…LKKG) and 91–120 (KFFR…LTPD). 8 residues coordinate [4Fe-4S] cluster: cysteine 61, cysteine 64, cysteine 67, cysteine 71, cysteine 100, cysteine 103, cysteine 106, and cysteine 110.

It belongs to the complex I 23 kDa subunit family. As to quaternary structure, NDH-1 is composed of 13 different subunits. Subunits NuoA, H, J, K, L, M, N constitute the membrane sector of the complex. [4Fe-4S] cluster serves as cofactor.

It localises to the cell inner membrane. The enzyme catalyses a quinone + NADH + 5 H(+)(in) = a quinol + NAD(+) + 4 H(+)(out). NDH-1 shuttles electrons from NADH, via FMN and iron-sulfur (Fe-S) centers, to quinones in the respiratory chain. The immediate electron acceptor for the enzyme in this species is believed to be ubiquinone. Couples the redox reaction to proton translocation (for every two electrons transferred, four hydrogen ions are translocated across the cytoplasmic membrane), and thus conserves the redox energy in a proton gradient. In Blochmanniella pennsylvanica (strain BPEN), this protein is NADH-quinone oxidoreductase subunit I.